A 319-amino-acid chain; its full sequence is Taste receptor type 2 member 30 (319 aa).

Met1 is a topological domain (extracellular). The helical transmembrane segment at 2–22 threads the bilayer; that stretch reads ITFLPIIFSILIVVIFVVGNF. At 23 to 46 the chain is on the cytoplasmic side; it reads ANGFIALVNSIEWVKRQKISFVDQ. The helical transmembrane segment at 47-67 threads the bilayer; the sequence is ILTALAVSRVGLLWVLLLHWY. The Extracellular segment spans residues 68-86; sequence ATQLNPAFYSVEVRITVYN. A helical membrane pass occupies residues 87-107; that stretch reads VWAVTNHFSSWLATSLSMFYL. Over 108-126 the chain is Cytoplasmic; sequence LKIANFSNLIFLRIKRRVK. Residues 127–147 form a helical membrane-spanning segment; the sequence is SVVLVILLGPLLFLVCHLFVI. The Extracellular segment spans residues 148–178; the sequence is NMDETIWTKEYEGNMTWKIKLKSAMYHSNMT. N-linked (GlcNAc...) asparagine glycosylation is found at Asn161 and Asn176. A helical membrane pass occupies residues 179-199; sequence LTILANFVPLTLTLISFLLLI. The Cytoplasmic portion of the chain corresponds to 200-229; that stretch reads CSLCKHLKKMQLHGKGSQDPSTKVHIKALQ. A helical membrane pass occupies residues 230–250; the sequence is TVTSFLLLCAIYFLSMIISVC. The Extracellular segment spans residues 251–259; sequence NLGRLQKQP. A helical transmembrane segment spans residues 260-280; sequence VFMFCQAIIFSYPSTHPFILI. Over 281–319 the chain is Cytoplasmic; that stretch reads LGNKKLKQIFLSVLWHVRYWVKDRSLRLHRFTRAALCKG.

It belongs to the G-protein coupled receptor T2R family.

The protein localises to the membrane. Functionally, receptor that may play a role in the perception of bitterness and is gustducin-linked. May play a role in sensing the chemical composition of the gastrointestinal content. The activity of this receptor may stimulate alpha gustducin, mediate PLC-beta-2 activation and lead to the gating of TRPM5. The sequence is that of Taste receptor type 2 member 30 (TAS2R30) from Pan paniscus (Pygmy chimpanzee).